The chain runs to 84 residues: Large ribosomal subunit protein bL31B (84 aa).

It belongs to the bacterial ribosomal protein bL31 family. Type B subfamily. As to quaternary structure, part of the 50S ribosomal subunit.

This is Large ribosomal subunit protein bL31B from Rhodococcus opacus (strain B4).